Consider the following 334-residue polypeptide: N-acetyl-gamma-glutamyl-phosphate reductase (334 aa).

The active site involves Cys-154.

Belongs to the NAGSA dehydrogenase family. Type 1 subfamily.

It is found in the cytoplasm. The catalysed reaction is N-acetyl-L-glutamate 5-semialdehyde + phosphate + NADP(+) = N-acetyl-L-glutamyl 5-phosphate + NADPH + H(+). Its pathway is amino-acid biosynthesis; L-arginine biosynthesis; N(2)-acetyl-L-ornithine from L-glutamate: step 3/4. In terms of biological role, catalyzes the NADPH-dependent reduction of N-acetyl-5-glutamyl phosphate to yield N-acetyl-L-glutamate 5-semialdehyde. The protein is N-acetyl-gamma-glutamyl-phosphate reductase of Escherichia coli O157:H7.